Here is a 224-residue protein sequence, read N- to C-terminus: MVQCLVVDDDPRILNYIASHLQTEHIDAFTQPSGEAALKLLEKQRVDIAVVDIMMDGMDGFQLCNTLKNDYDIPVIMLTARDALSDKERAFISGTDDYVTKPFEVKELIFRIRAVLRRYNINSNSEMTIGNLTLNQSYLELQVSNKTMTLPNKEFQLLFMLAARPKQIFTREQIIEKIWGYDYEGDERTVDVHIKRLRQRLKKLNATLTIETVRGQGYKVENHV.

The 114-residue stretch at 3–116 (QCLVVDDDPR…ELIFRIRAVL (114 aa)) folds into the Response regulatory domain. Aspartate 52 bears the 4-aspartylphosphate mark. The ompR/PhoB-type DNA-binding region spans 124 to 222 (NSEMTIGNLT…VRGQGYKVEN (99 aa)).

In terms of processing, phosphorylated by HssS.

It is found in the cytoplasm. In terms of biological role, member of the two-component regulatory system HssS/HssR involved in intracellular heme homeostasis and tempering of staphylococcal virulence. Phosphorylated HssR binds to a direct repeat sequence within hrtAB promoter and activates the expression of hrtAB, an efflux pump, in response to extracellular heme, hemin, hemoglobin or blood. This is Heme response regulator HssR (hssR) from Staphylococcus aureus (strain MRSA252).